The primary structure comprises 155 residues: Small ribosomal subunit protein uS7cz/uS7cy (155 aa).

This sequence belongs to the universal ribosomal protein uS7 family. In terms of assembly, part of the 30S ribosomal subunit.

It localises to the plastid. The protein resides in the chloroplast. One of the primary rRNA binding proteins, it binds directly to 16S rRNA where it nucleates assembly of the head domain of the 30S subunit. This Drimys granadensis protein is Small ribosomal subunit protein uS7cz/uS7cy (rps7-A).